A 267-amino-acid polypeptide reads, in one-letter code: 2-keto-3-deoxy-L-rhamnonate aldolase (267 aa).

Histidine 49 acts as the Proton acceptor in catalysis. Glutamine 151 provides a ligand contact to substrate. Glutamate 153 is a binding site for Mg(2+). Residues alanine 178 and aspartate 179 each coordinate substrate. Aspartate 179 serves as a coordination point for Mg(2+).

This sequence belongs to the HpcH/HpaI aldolase family. KDR aldolase subfamily. Homohexamer. Mg(2+) serves as cofactor.

It carries out the reaction 2-dehydro-3-deoxy-L-rhamnonate = (S)-lactaldehyde + pyruvate. Catalyzes the reversible retro-aldol cleavage of 2-keto-3-deoxy-L-rhamnonate (KDR) to pyruvate and lactaldehyde. The chain is 2-keto-3-deoxy-L-rhamnonate aldolase from Escherichia coli O157:H7.